Consider the following 514-residue polypeptide: Probable outer membrane protein pmp12 (514 aa).

Residues 1–21 (MTILRNFLTCSALFLALPAAA) form the signal peptide.

It belongs to the PMP outer membrane protein family.

It localises to the secreted. Its subcellular location is the cell wall. The protein localises to the cell outer membrane. In Chlamydia pneumoniae (Chlamydophila pneumoniae), this protein is Probable outer membrane protein pmp12 (pmp12).